A 310-amino-acid chain; its full sequence is D-erythrulose 1-phosphate 3-epimerase (310 aa).

It catalyses the reaction D-erythrulose 1-phosphate = L-erythrulose 1-phosphate. It functions in the pathway carbohydrate metabolism; erythritol degradation. Catalyzes the racemization of D-erythrulose 1-phosphate to L-erythrulose 1-phosphate. This is D-erythrulose 1-phosphate 3-epimerase from Brucella abortus (strain 2308).